The primary structure comprises 150 residues: Cytochrome c-type biogenesis protein CcmE (150 aa).

The Cytoplasmic portion of the chain corresponds to 1–7; it reads MTRKQKR. A helical; Signal-anchor for type II membrane protein transmembrane segment spans residues 8-28; that stretch reads LAIIGGGVGFLTAAVLLVMFA. Residues 29–150 lie on the Periplasmic side of the membrane; it reads FSQAVAYFYV…VTLGGEENIR (122 aa). The heme site is built by H123 and Y127.

It belongs to the CcmE/CycJ family.

It localises to the cell inner membrane. Heme chaperone required for the biogenesis of c-type cytochromes. Transiently binds heme delivered by CcmC and transfers the heme to apo-cytochromes in a process facilitated by CcmF and CcmH. The protein is Cytochrome c-type biogenesis protein CcmE of Sinorhizobium medicae (strain WSM419) (Ensifer medicae).